Consider the following 522-residue polypeptide: Zinc finger protein C25B8.19c (522 aa).

5 disordered regions span residues 1–25 (MSSDNTPSINRRNNENPPQSSLPTT), 61–96 (DPQAATVSESANVSRPTPAPVPPAGNTNTPTTSNSN), 235–265 (QRQSSEAAEQPSSKNNTSGANPPSSNNQEVT), 311–386 (QPSS…HTLS), and 413–462 (NSAQ…STSS). Low complexity predominate over residues 84–96 (AGNTNTPTTSNSN). Composition is skewed to polar residues over residues 311–321 (QPSSRDLQNHP) and 335–344 (ASNTLNHANG). A compositionally biased stretch (low complexity) spans 345-362 (NQAENASESSTSQSNDSQ). Residues 413-427 (NSAQAHPMGQQSDSN) show a composition bias toward polar residues. Residues 428–438 (YSDHHNNDKRA) are compositionally biased toward basic and acidic residues. Positions 453-462 (SHTGSSSTSS) are enriched in low complexity. 2 consecutive C2H2-type zinc fingers follow at residues 468 to 495 (YRCTECLQGFSRPSSLKIHTYSHTGERP) and 496 to 522 (FVCDYAGCGKAFNVRSNMRRHQRIHGL).

Its subcellular location is the nucleus. In Schizosaccharomyces pombe (strain 972 / ATCC 24843) (Fission yeast), this protein is Zinc finger protein C25B8.19c.